Consider the following 743-residue polypeptide: Protein will decrease acetylation (743 aa).

WD repeat units follow at residues 389-428 (ERSR…CRGK), 493-524 (LRGH…MRCW), 535-576 (YRSH…ALII), 577-618 (YAGH…LMRV), 619-660 (FADC…QLAE), and 661-702 (LKDH…PMSD).

It belongs to the WD repeat TAF5 family. Component of the Spt-Ada-Gcn5 acetyltransferase (SAGA) complex consisting of wda/Taf5L, Saf6, Taf9, Taf10b, Taf12, Ada1, Spt3, Spt7, Spt20, Sf3b3, Sf3b5, Nipped-A/Tra1, a histone acetyltransferase (HAT) module made up of Gcn5, Ada2b (Isoform B), Ada3 and Sgf29, and a deubiquitinase (DUB) module made up of not/nonstop, Sgf11 and e(y)2 tethered to SAGA by Atxn7. Not essential for the assembly or integrity of the SAGA complex. Not a component of the Ada2a-containing ATAC complex.

It is found in the nucleus. It localises to the chromosome. Functionally, component of the transcription regulatory complex SAGA, a multiprotein complex that activates transcription by remodeling chromatin and mediating histone acetylation and deubiquitination. The SAGA complex predominantly acetylates histone H3. Involved in acetylation of histone H3 on 'Lys-10' (H3K9ac) by the SAGA complex in the larval central nervous system. Involved in SAGA complex coactivator functions. Required for oogenesis. The polypeptide is Protein will decrease acetylation (Drosophila melanogaster (Fruit fly)).